The sequence spans 274 residues: Eukaryotic translation initiation factor 3 subunit G-2 (274 aa).

Residues 194-272 (SAVRISNLSE…LILCVEWSKP (79 aa)) enclose the RRM domain.

Belongs to the eIF-3 subunit G family. As to quaternary structure, component of the eukaryotic translation initiation factor 3 (eIF-3) complex. The eIF-3 complex interacts with pix.

It is found in the cytoplasm. Functionally, RNA-binding component of the eukaryotic translation initiation factor 3 (eIF-3) complex, which is involved in protein synthesis of a specialized repertoire of mRNAs and, together with other initiation factors, stimulates binding of mRNA and methionyl-tRNAi to the 40S ribosome. The eIF-3 complex specifically targets and initiates translation of a subset of mRNAs involved in cell proliferation. This subunit can bind 18S rRNA. The protein is Eukaryotic translation initiation factor 3 subunit G-2 of Drosophila pseudoobscura pseudoobscura (Fruit fly).